The primary structure comprises 499 residues: Guanosine-5'-triphosphate,3'-diphosphate pyrophosphatase (499 aa).

Belongs to the GppA/Ppx family. GppA subfamily.

The catalysed reaction is guanosine 3'-diphosphate 5'-triphosphate + H2O = guanosine 3',5'-bis(diphosphate) + phosphate + H(+). The protein operates within purine metabolism; ppGpp biosynthesis; ppGpp from GTP: step 2/2. Functionally, catalyzes the conversion of pppGpp to ppGpp. Guanosine pentaphosphate (pppGpp) is a cytoplasmic signaling molecule which together with ppGpp controls the 'stringent response', an adaptive process that allows bacteria to respond to amino acid starvation, resulting in the coordinated regulation of numerous cellular activities. The polypeptide is Guanosine-5'-triphosphate,3'-diphosphate pyrophosphatase (Klebsiella pneumoniae subsp. pneumoniae (strain ATCC 700721 / MGH 78578)).